Reading from the N-terminus, the 317-residue chain is Homoserine O-acetyltransferase (317 aa).

Catalysis depends on Cys-142, which acts as the Acyl-thioester intermediate. Positions 163 and 192 each coordinate substrate. His-235 serves as the catalytic Proton acceptor. Glu-237 is an active-site residue. Arg-249 is a substrate binding site.

This sequence belongs to the MetA family.

It localises to the cytoplasm. It carries out the reaction L-homoserine + acetyl-CoA = O-acetyl-L-homoserine + CoA. It functions in the pathway amino-acid biosynthesis; L-methionine biosynthesis via de novo pathway; O-acetyl-L-homoserine from L-homoserine: step 1/1. Functionally, transfers an acetyl group from acetyl-CoA to L-homoserine, forming acetyl-L-homoserine. This chain is Homoserine O-acetyltransferase, found in Rhizorhabdus wittichii (strain DSM 6014 / CCUG 31198 / JCM 15750 / NBRC 105917 / EY 4224 / RW1) (Sphingomonas wittichii).